The primary structure comprises 357 residues: DNA replication and repair protein RecF (357 aa).

30-37 (GANGSGKT) contacts ATP.

The protein belongs to the RecF family.

It localises to the cytoplasm. Its function is as follows. The RecF protein is involved in DNA metabolism; it is required for DNA replication and normal SOS inducibility. RecF binds preferentially to single-stranded, linear DNA. It also seems to bind ATP. In Klebsiella pneumoniae subsp. pneumoniae (strain ATCC 700721 / MGH 78578), this protein is DNA replication and repair protein RecF.